A 154-amino-acid polypeptide reads, in one-letter code: Crossover junction endodeoxyribonuclease RuvC (154 aa).

Catalysis depends on residues Asp-7, Glu-67, and Asp-139. Residues Asp-7, Glu-67, and Asp-139 each contribute to the Mg(2+) site.

This sequence belongs to the RuvC family. As to quaternary structure, homodimer which binds Holliday junction (HJ) DNA. The HJ becomes 2-fold symmetrical on binding to RuvC with unstacked arms; it has a different conformation from HJ DNA in complex with RuvA. In the full resolvosome a probable DNA-RuvA(4)-RuvB(12)-RuvC(2) complex forms which resolves the HJ. Requires Mg(2+) as cofactor.

Its subcellular location is the cytoplasm. The catalysed reaction is Endonucleolytic cleavage at a junction such as a reciprocal single-stranded crossover between two homologous DNA duplexes (Holliday junction).. Its function is as follows. The RuvA-RuvB-RuvC complex processes Holliday junction (HJ) DNA during genetic recombination and DNA repair. Endonuclease that resolves HJ intermediates. Cleaves cruciform DNA by making single-stranded nicks across the HJ at symmetrical positions within the homologous arms, yielding a 5'-phosphate and a 3'-hydroxyl group; requires a central core of homology in the junction. The consensus cleavage sequence is 5'-(A/T)TT(C/G)-3'. Cleavage occurs on the 3'-side of the TT dinucleotide at the point of strand exchange. HJ branch migration catalyzed by RuvA-RuvB allows RuvC to scan DNA until it finds its consensus sequence, where it cleaves and resolves the cruciform DNA. The polypeptide is Crossover junction endodeoxyribonuclease RuvC (Prochlorococcus marinus (strain NATL2A)).